Here is a 402-residue protein sequence, read N- to C-terminus: TBC1 domain family member 20 (402 aa).

Residues Met1–Lys27 form a disordered region. Residues Arg14–Ala26 show a composition bias toward basic and acidic residues. One can recognise a Rab-GAP TBC domain in the interval Leu59–His245. 2 helical membrane-spanning segments follow: residues Leu237–Val257 and Phe366–Val386.

The protein localises to the membrane. Its function is as follows. GTPase-activating protein specific for Rab1 and Rab2 small GTPase families for which it can accelerate the intrinsic GTP hydrolysis rate by more than five orders of magnitude. Also shows GAP activity for RAB18 GTPase. Promotes RAB18 dissociation from the endoplasmic reticulum (ER) membrane into the cytosol, probably through stimulating RAB18 GTP-hydrolysis. Involved in maintaining endoplasmic reticulum structure. This Mus musculus (Mouse) protein is TBC1 domain family member 20.